A 631-amino-acid polypeptide reads, in one-letter code: 1-deoxy-D-xylulose-5-phosphate synthase (631 aa).

Thiamine diphosphate contacts are provided by residues histidine 73 and 114–116 (SHA). Aspartate 145 provides a ligand contact to Mg(2+). Thiamine diphosphate-binding positions include 146 to 147 (GA), asparagine 175, tyrosine 286, and glutamate 368. Residue asparagine 175 coordinates Mg(2+).

The protein belongs to the transketolase family. DXPS subfamily. In terms of assembly, homodimer. It depends on Mg(2+) as a cofactor. Thiamine diphosphate serves as cofactor.

The enzyme catalyses D-glyceraldehyde 3-phosphate + pyruvate + H(+) = 1-deoxy-D-xylulose 5-phosphate + CO2. It functions in the pathway metabolic intermediate biosynthesis; 1-deoxy-D-xylulose 5-phosphate biosynthesis; 1-deoxy-D-xylulose 5-phosphate from D-glyceraldehyde 3-phosphate and pyruvate: step 1/1. In terms of biological role, catalyzes the acyloin condensation reaction between C atoms 2 and 3 of pyruvate and glyceraldehyde 3-phosphate to yield 1-deoxy-D-xylulose-5-phosphate (DXP). The sequence is that of 1-deoxy-D-xylulose-5-phosphate synthase from Nocardia farcinica (strain IFM 10152).